We begin with the raw amino-acid sequence, 429 residues long: BURP domain-containing protein 3 (429 aa).

The signal sequence occupies residues 1 to 21 (MDRLLACLLGFLLIASVGSHA). The tract at residues 59–81 (GGGVHVDAGHGKPGGTTVDVGKG) is disordered. Positions 213-428 (FFLEKDLHPG…PQDHVVWTRS (216 aa)) constitute a BURP domain.

In terms of tissue distribution, expressed in stems, leaves, shoot, panicles and stamen.

This Oryza sativa subsp. japonica (Rice) protein is BURP domain-containing protein 3 (BURP3).